The primary structure comprises 110 residues: PHD finger-like domain-containing protein 5B (110 aa).

Belongs to the PHF5 family.

The polypeptide is PHD finger-like domain-containing protein 5B (Arabidopsis thaliana (Mouse-ear cress)).